We begin with the raw amino-acid sequence, 753 residues long: MTILNHTLGFPRVGLRRELKKAQESYWAGNSTREELLTVGRELRARHWDQQKQAGIDLLPVGDFAWYDHVLTTSLLLGNVPPRHQNKDGSVDIDTLFRIGRGRAPTGEPAAAAEMTKWFNTNYHYMVPEFVKGQQFKLTWTQLLEEVDEALALGHNVKPVLLGPVTYLWLGKVKGEQFDRLSLLNDILPVYQQVLAELAKRGIEWVQIDEPALVLELPQAWLDAYKPAYDALQGQVKLLLTTYFEGVTPNLDTITALPVQGLHVDLVHGKDDVAELHKRLPSDWLLSAGLINGRNVWRADLTEKYAQIKDIVGKRDLWVASSCSLLHSPIDLSVETRLDAEVKSWFAFALQKCHELALLRDALNSGDTAALAEWSAPIQARRHSTRVHNPAVEKRLAAITAQDSQRANVYEVRAEAQRARFKLPAWPTTTIGSFPQTTEIRTLRLDFKKGNLDANNYRTGIAEHIRQAIVEQERLGLDVLVHGEAERNDMVEYFGEHLDGFVFTQNGWVQSYGSRCVKPPIVIGDISRPAPITVEWAKYAQSLTDKPVKGMLTGPVTILCWSFPREDVSRETIAKQIALALRDEVADLEAAGIGIIQIDEPALREGLPLRRSDWDAYLQWGVEAFRINAAVAKDDTQIHTHMCYCEFNDIMDSIAALDADVITIETSRSDMELLESFEEFDYPNEIGPGVYDIHSPNVPSVEWIEALLKKAAKRIPAERLWVNPDCGLKTRGWPETRAALANMVQAAQNLRRG.

Residues 17-20 (RELK) and lysine 117 each bind 5-methyltetrahydropteroyltri-L-glutamate. Residues 431–433 (IGS) and glutamate 484 contribute to the L-homocysteine site. L-methionine-binding positions include 431 to 433 (IGS) and glutamate 484. Residues 515 to 516 (RC) and tryptophan 561 each bind 5-methyltetrahydropteroyltri-L-glutamate. Aspartate 599 contacts L-homocysteine. Aspartate 599 lines the L-methionine pocket. Glutamate 605 is a 5-methyltetrahydropteroyltri-L-glutamate binding site. Zn(2+) contacts are provided by histidine 641, cysteine 643, and glutamate 665. Residue histidine 694 is the Proton donor of the active site. Cysteine 726 provides a ligand contact to Zn(2+).

This sequence belongs to the vitamin-B12 independent methionine synthase family. Zn(2+) serves as cofactor.

It carries out the reaction 5-methyltetrahydropteroyltri-L-glutamate + L-homocysteine = tetrahydropteroyltri-L-glutamate + L-methionine. It functions in the pathway amino-acid biosynthesis; L-methionine biosynthesis via de novo pathway; L-methionine from L-homocysteine (MetE route): step 1/1. In terms of biological role, catalyzes the transfer of a methyl group from 5-methyltetrahydrofolate to homocysteine resulting in methionine formation. The protein is 5-methyltetrahydropteroyltriglutamate--homocysteine methyltransferase of Escherichia coli O139:H28 (strain E24377A / ETEC).